The following is a 290-amino-acid chain: uncharacterized protein (290 aa).

NAD(+) is bound by residues 7 to 21 (AVFG…MAQN) and Thr100. The active site involves Lys175. NAD(+) is bound at residue Lys243.

It belongs to the HIBADH-related family.

This is an uncharacterized protein from Synechocystis sp. (strain ATCC 27184 / PCC 6803 / Kazusa).